The following is a 424-amino-acid chain: Enolase (424 aa).

Glutamine 162 lines the (2R)-2-phosphoglycerate pocket. Glutamate 204 functions as the Proton donor in the catalytic mechanism. Mg(2+) is bound by residues aspartate 241, glutamate 284, and aspartate 311. (2R)-2-phosphoglycerate-binding residues include lysine 336, arginine 365, serine 366, and lysine 387. The active-site Proton acceptor is lysine 336.

It belongs to the enolase family. The cofactor is Mg(2+).

The protein resides in the cytoplasm. It localises to the secreted. It is found in the cell surface. It catalyses the reaction (2R)-2-phosphoglycerate = phosphoenolpyruvate + H2O. The protein operates within carbohydrate degradation; glycolysis; pyruvate from D-glyceraldehyde 3-phosphate: step 4/5. Functionally, catalyzes the reversible conversion of 2-phosphoglycerate (2-PG) into phosphoenolpyruvate (PEP). It is essential for the degradation of carbohydrates via glycolysis. This is Enolase from Rhizobium etli (strain ATCC 51251 / DSM 11541 / JCM 21823 / NBRC 15573 / CFN 42).